We begin with the raw amino-acid sequence, 637 residues long: Threonine--tRNA ligase (637 aa).

Residues 1-61 enclose the TGS domain; that stretch reads MPNVKLPDGN…KEDCSLIIVT (61 aa). Residues 242–533 form a catalytic region; that stretch reads DHRKLGKALD…LIEHYAGKLP (292 aa). Residues Cys333, His384, and His510 each contribute to the Zn(2+) site.

It belongs to the class-II aminoacyl-tRNA synthetase family. As to quaternary structure, homodimer. The cofactor is Zn(2+).

The protein localises to the cytoplasm. The catalysed reaction is tRNA(Thr) + L-threonine + ATP = L-threonyl-tRNA(Thr) + AMP + diphosphate + H(+). Its function is as follows. Catalyzes the attachment of threonine to tRNA(Thr) in a two-step reaction: L-threonine is first activated by ATP to form Thr-AMP and then transferred to the acceptor end of tRNA(Thr). Also edits incorrectly charged L-seryl-tRNA(Thr). The polypeptide is Threonine--tRNA ligase (Legionella pneumophila (strain Corby)).